Here is a 326-residue protein sequence, read N- to C-terminus: Pyruvate dehydrogenase E1 component subunit beta (326 aa).

Residue Glu59 coordinates thiamine diphosphate.

Heterodimer of an alpha and a beta chain. It depends on thiamine diphosphate as a cofactor.

The catalysed reaction is N(6)-[(R)-lipoyl]-L-lysyl-[protein] + pyruvate + H(+) = N(6)-[(R)-S(8)-acetyldihydrolipoyl]-L-lysyl-[protein] + CO2. Functionally, the pyruvate dehydrogenase complex catalyzes the overall conversion of pyruvate to acetyl-CoA and CO(2). It contains multiple copies of three enzymatic components: pyruvate dehydrogenase (E1), dihydrolipoamide acetyltransferase (E2) and lipoamide dehydrogenase (E3). This Rickettsia felis (strain ATCC VR-1525 / URRWXCal2) (Rickettsia azadi) protein is Pyruvate dehydrogenase E1 component subunit beta (pdhB).